Here is a 429-residue protein sequence, read N- to C-terminus: GTPase Obg (429 aa).

Residues 1-158 (MFADSAKIFI…LNVTLELKVI (158 aa)) enclose the Obg domain. Residues 159–333 (ADVGLVGFPN…LLYYVSDLLK (175 aa)) enclose the OBG-type G domain. GTP is bound by residues 165–172 (GFPNVGKS), 190–194 (FTTLN), 212–215 (DIPG), 282–285 (NKTD), and 314–316 (SAV). Mg(2+) is bound by residues S172 and T192. The OCT domain maps to 350–429 (ENLVMSEPYT…MYGLEFDYYK (80 aa)).

This sequence belongs to the TRAFAC class OBG-HflX-like GTPase superfamily. OBG GTPase family. Monomer. It depends on Mg(2+) as a cofactor.

Its subcellular location is the cytoplasm. An essential GTPase which binds GTP, GDP and possibly (p)ppGpp with moderate affinity, with high nucleotide exchange rates and a fairly low GTP hydrolysis rate. Plays a role in control of the cell cycle, stress response, ribosome biogenesis and in those bacteria that undergo differentiation, in morphogenesis control. In Lachnoclostridium phytofermentans (strain ATCC 700394 / DSM 18823 / ISDg) (Clostridium phytofermentans), this protein is GTPase Obg.